Reading from the N-terminus, the 393-residue chain is uncharacterized protein (393 aa).

The OBG-type G domain maps to 2–266 (AMIGLVGKPN…AEKAGIIKRK (265 aa)). GTP-binding positions include 8 to 15 (GKPNVGKS) and 78 to 82 (DVAGL). The TGS domain maps to 314–390 (DMIVVYPVED…KHNDIIKIVS (77 aa)).

It belongs to the TRAFAC class OBG-HflX-like GTPase superfamily. OBG GTPase family.

This is an uncharacterized protein from Methanocaldococcus jannaschii (strain ATCC 43067 / DSM 2661 / JAL-1 / JCM 10045 / NBRC 100440) (Methanococcus jannaschii).